Consider the following 440-residue polypeptide: Actin-like protein 7A (440 aa).

A disordered region spans residues 1–27 (MSLDAVWAPQTANIGDGPAKKASDQTS). Residues 36–56 (ASLRDGPAKRAVWVRRDNAEK) form a required for interaction with TES region.

It belongs to the actin family. In terms of assembly, interacts (via N-terminus) with TES (via LIM domain 2). Heterodimer with TES; the heterodimer interacts with ENAH to form a heterotrimer. Interacts with ACTL9. Interacts with CYLC1; the interaction may be relevant for proper acrosome attachment to the nuclear envelope. As to expression, detected in testis. Detected at the acrosome of round spermatids (at protein level).

The protein localises to the cytoplasm. Its subcellular location is the cytoskeleton. The protein resides in the golgi apparatus. It localises to the nucleus. Functionally, essential for normal spermatogenesis and male fertility. Required for normal sperm head morphology, acroplaxome formation, acrosome attachment, and acrosome granule stability. May anchor and stabilize acrosomal adherence to the acroplaxome at least in part by facilitating the presence of F-actin in the subacrosomal space. May play an important role in formation and fusion of Golgi-derived vesicles during acrosome biogenesis. This Rattus norvegicus (Rat) protein is Actin-like protein 7A (Actl7a).